The chain runs to 184 residues: Large ribosomal subunit protein eL14 (184 aa).

The interval 149 to 184 (KNAKKVDSTPAAKKRIEKARAARKAKPTAAKEKSKK) is disordered. Positions 160–174 (AKKRIEKARAARKAK) are enriched in basic residues.

Belongs to the eukaryotic ribosomal protein eL14 family.

The sequence is that of Large ribosomal subunit protein eL14 from Trypanosoma congolense.